The primary structure comprises 703 residues: Polyribonucleotide nucleotidyltransferase (703 aa).

Mg(2+)-binding residues include D488 and D494. Residues 555-614 (PKIVKMQINPDKIKDVIGPGGKIITKIIDETGVKIDIEQTGEVFISGIEIDMIKKAQELI) form the KH domain. One can recognise an S1 motif domain in the interval 624–692 (GKTYKGKVSR…EKGRVNLSRK (69 aa)).

It belongs to the polyribonucleotide nucleotidyltransferase family. Requires Mg(2+) as cofactor.

The protein localises to the cytoplasm. It catalyses the reaction RNA(n+1) + phosphate = RNA(n) + a ribonucleoside 5'-diphosphate. In terms of biological role, involved in mRNA degradation. Catalyzes the phosphorolysis of single-stranded polyribonucleotides processively in the 3'- to 5'-direction. The protein is Polyribonucleotide nucleotidyltransferase of Clostridioides difficile (strain 630) (Peptoclostridium difficile).